A 499-amino-acid polypeptide reads, in one-letter code: ADP,ATP carrier protein 5 (499 aa).

A run of 11 helical transmembrane segments spans residues 25–45, 61–81, 93–113, 148–168, 183–203, 223–243, 286–306, 327–347, 356–376, 380–400, and 468–488; these read LGKF…QNIL, IAGF…VIIY, IFYY…FVIY, YIVY…LLFW, FYTF…FLMM, ITLV…CCVL, LWLL…VEAV, LYIL…NNVM, AVIS…LIVF, ILSL…VSIG, and SISP…IYAV.

The protein belongs to the ADP/ATP translocase tlc family.

The protein localises to the cell membrane. Its function is as follows. Provides the rickettsial cell with host ATP in exchange for rickettsial ADP. This is an obligate exchange system. This energy acquiring activity is an important component of rickettsial parasitism. The protein is ADP,ATP carrier protein 5 (tlcE) of Rickettsia felis (strain ATCC VR-1525 / URRWXCal2) (Rickettsia azadi).